A 222-amino-acid chain; its full sequence is Ribonuclease HII (222 aa).

Residues 32–222 (FHIAGVDEVG…LIKRYKEDIS (191 aa)) enclose the RNase H type-2 domain. Aspartate 38, glutamate 39, and aspartate 130 together coordinate a divalent metal cation.

This sequence belongs to the RNase HII family. Mn(2+) is required as a cofactor. It depends on Mg(2+) as a cofactor.

It is found in the cytoplasm. It carries out the reaction Endonucleolytic cleavage to 5'-phosphomonoester.. Its function is as follows. Endonuclease that specifically degrades the RNA of RNA-DNA hybrids. The polypeptide is Ribonuclease HII (Bartonella bacilliformis (strain ATCC 35685 / KC583 / Herrer 020/F12,63)).